Here is a 341-residue protein sequence, read N- to C-terminus: METPFYGEEALSGLAAGASSVAGAAGAPGGGGFAPPGRAFPGAPPTSSMLKKDALTLSLAEQGAAGLKPGSATAPSALRPDGAPDGLLASPDLGLLKLASPELERLIIQSNGLVTTTPTSTQFLYPKVAASEEQEFAEGFVKALEDLHKQSQLGAATAATSGAPAPPAPADLAATPGATETPVYANLSSFAGGAGPPGGAATVAFAAEPVPFPPPPGALGPPPPPHPPRLAALKDEPQTVPDVPSFGDSPPLSPIDMDTQERIKAERKRLRNRIAASKCRKRKLERISRLEEKVKTLKSQNTELASTASLLREQVAQLKQKVLSHVNSGCQLLPQHQVPAY.

The interval 21 to 49 is disordered; it reads VAGAAGAPGGGGFAPPGRAFPGAPPTSSM. The Menin-binding motif (MBM) signature appears at 35-47; the sequence is PPGRAFPGAPPTS. Residues 51-60 carry the MAP kinase docking motif; essential for its phosphorylation motif; sequence KKDALTLSLA. Positions 65 to 85 are disordered; the sequence is AGLKPGSATAPSALRPDGAPD. The residue at position 90 (S90) is a Phosphoserine. Position 100 is a phosphoserine; by MAPK8 (S100). The residue at position 117 (T117) is a Phosphothreonine. The interval 155 to 176 is disordered; the sequence is AATAATSGAPAPPAPADLAATP. A phosphoserine mark is found at S245, S249, and S253. The basic motif stretch occupies residues 262 to 289; the sequence is RIKAERKRLRNRIAASKCRKRKLERISR. The region spanning 262–325 is the bZIP domain; it reads RIKAERKRLR…AQLKQKVLSH (64 aa). The tract at residues 290 to 318 is leucine-zipper; sequence LEEKVKTLKSQNTELASTASLLREQVAQL.

It belongs to the bZIP family. Jun subfamily. Heterodimer; binds DNA as a heterodimer. Component of an AP-1 transcription factor complex composed of JUN-FOS heterodimers. As part of the AP-1 transcription factor complex, forms heterodimers with FOS proteins, thereby binding to the AP-1 consensus sequence and stimulating transcription. Forms heterodimers with FOSB; thereby binding to the AP-1 consensus sequence. Interacts (via MBM motif) with MEN1; this interaction represses transcriptional activation. Interacts with MAPK10; this interaction is inhibited in the presence of MEN1. Post-translationally, phosphorylated by MAP kinases MAPK8 and MAPK10; phosphorylation is inhibited in the presence of MEN1.

Its subcellular location is the nucleus. Functionally, transcription factor binding AP-1 sites. Heterodimerizes with proteins of the FOS family to form an AP-1 transcription factor complex, thereby enhancing their DNA binding activity to an AP-1 consensus sequence 3'-TGA[GC]TCA-5' and enhancing their transcriptional activity. The protein is Transcription factor JunD (Jund) of Rattus norvegicus (Rat).